The following is a 324-amino-acid chain: 2-oxoisovalerate dehydrogenase subunit beta (324 aa).

Residues Glu-29, 58 to 60, Gln-82, and 86 to 89 contribute to the thiamine diphosphate site; these read LSE and YIFP. Residues 83–86 and His-129 each bind substrate; that span reads FADY. Residue His-129 is the Proton acceptor of the active site.

In terms of assembly, heterotetramer of two alpha and two beta chains. Directly associated with ODBA in the E1 complex. It depends on thiamine diphosphate as a cofactor.

The catalysed reaction is N(6)-[(R)-lipoyl]-L-lysyl-[protein] + 3-methyl-2-oxobutanoate + H(+) = N(6)-[(R)-S(8)-2-methylpropanoyldihydrolipoyl]-L-lysyl-[protein] + CO2. In terms of biological role, the branched-chain alpha-keto dehydrogenase complex catalyzes the overall conversion of alpha-keto acids to acyl-CoA and CO(2). It contains multiple copies of three enzymatic components: branched-chain alpha-keto acid decarboxylase (E1), lipoamide acyltransferase (E2) and lipoamide dehydrogenase (E3). This Thermus thermophilus (strain ATCC BAA-163 / DSM 7039 / HB27) protein is 2-oxoisovalerate dehydrogenase subunit beta.